A 305-amino-acid chain; its full sequence is UDP-3-O-acyl-N-acetylglucosamine deacetylase (305 aa).

Zn(2+)-binding residues include H79, H238, and D242. The Proton donor role is filled by H265.

The protein belongs to the LpxC family. Zn(2+) serves as cofactor.

It catalyses the reaction a UDP-3-O-[(3R)-3-hydroxyacyl]-N-acetyl-alpha-D-glucosamine + H2O = a UDP-3-O-[(3R)-3-hydroxyacyl]-alpha-D-glucosamine + acetate. Its pathway is glycolipid biosynthesis; lipid IV(A) biosynthesis; lipid IV(A) from (3R)-3-hydroxytetradecanoyl-[acyl-carrier-protein] and UDP-N-acetyl-alpha-D-glucosamine: step 2/6. Catalyzes the hydrolysis of UDP-3-O-myristoyl-N-acetylglucosamine to form UDP-3-O-myristoylglucosamine and acetate, the committed step in lipid A biosynthesis. In Escherichia coli O45:K1 (strain S88 / ExPEC), this protein is UDP-3-O-acyl-N-acetylglucosamine deacetylase.